Consider the following 188-residue polypeptide: Large ribosomal subunit protein eL18 (188 aa).

Residues 147-188 (EAEKHFGPAPGVPHSHTKPYVRSKGRKFERARGRRASRAYKN) are disordered. 2 stretches are compositionally biased toward basic residues: residues 161–171 (SHTKPYVRSKG) and 178–188 (RGRRASRAYKN).

It belongs to the eukaryotic ribosomal protein eL18 family.

The protein localises to the cytoplasm. The protein is Large ribosomal subunit protein eL18 (rpl-18) of Caenorhabditis elegans.